We begin with the raw amino-acid sequence, 603 residues long: Elongation factor 4 (603 aa).

Residues 7-189 (KKIRNFCIIA…SVVKNVPPPE (183 aa)) enclose the tr-type G domain. GTP contacts are provided by residues 19-24 (DHGKST) and 136-139 (NKID).

It belongs to the TRAFAC class translation factor GTPase superfamily. Classic translation factor GTPase family. LepA subfamily.

It localises to the cell membrane. It catalyses the reaction GTP + H2O = GDP + phosphate + H(+). Its function is as follows. Required for accurate and efficient protein synthesis under certain stress conditions. May act as a fidelity factor of the translation reaction, by catalyzing a one-codon backward translocation of tRNAs on improperly translocated ribosomes. Back-translocation proceeds from a post-translocation (POST) complex to a pre-translocation (PRE) complex, thus giving elongation factor G a second chance to translocate the tRNAs correctly. Binds to ribosomes in a GTP-dependent manner. This is Elongation factor 4 from Acetivibrio thermocellus (strain ATCC 27405 / DSM 1237 / JCM 9322 / NBRC 103400 / NCIMB 10682 / NRRL B-4536 / VPI 7372) (Clostridium thermocellum).